Reading from the N-terminus, the 419-residue chain is Serine hydroxymethyltransferase (419 aa).

(6S)-5,6,7,8-tetrahydrofolate contacts are provided by residues Leu121 and 125–127 (GHL). Position 230 is an N6-(pyridoxal phosphate)lysine (Lys230). 355–357 (SPF) contacts (6S)-5,6,7,8-tetrahydrofolate.

It belongs to the SHMT family. Homodimer. The cofactor is pyridoxal 5'-phosphate.

It is found in the cytoplasm. It carries out the reaction (6R)-5,10-methylene-5,6,7,8-tetrahydrofolate + glycine + H2O = (6S)-5,6,7,8-tetrahydrofolate + L-serine. Its pathway is one-carbon metabolism; tetrahydrofolate interconversion. It participates in amino-acid biosynthesis; glycine biosynthesis; glycine from L-serine: step 1/1. Catalyzes the reversible interconversion of serine and glycine with tetrahydrofolate (THF) serving as the one-carbon carrier. This reaction serves as the major source of one-carbon groups required for the biosynthesis of purines, thymidylate, methionine, and other important biomolecules. Also exhibits THF-independent aldolase activity toward beta-hydroxyamino acids, producing glycine and aldehydes, via a retro-aldol mechanism. The chain is Serine hydroxymethyltransferase from Streptococcus equi subsp. zooepidemicus (strain H70).